Here is a 201-residue protein sequence, read N- to C-terminus: Aminoglycoside N(6')-acetyltransferase type 1 (201 aa).

Residues 25 to 192 enclose the N-acetyltransferase domain; sequence VTLRLMTEHD…PAVYMVQTRQ (168 aa). Substrate contacts are provided by Trp51 and Asp154. Residue Asn159 coordinates acetyl-CoA.

As to quaternary structure, homodimer.

The catalysed reaction is kanamycin B + acetyl-CoA = N(6')-acetylkanamycin B + CoA + H(+). Its function is as follows. Catalyzes the transfer of an acetyl group from acetyl-CoA to the 6'-amino group of aminoglycoside molecules conferring resistance to antibiotics containing the purpurosamine ring including amikacin and kanamycin. The polypeptide is Aminoglycoside N(6')-acetyltransferase type 1 (aacA4) (Serratia marcescens).